The sequence spans 129 residues: Large ribosomal subunit protein bL19 (129 aa).

Belongs to the bacterial ribosomal protein bL19 family.

Its function is as follows. This protein is located at the 30S-50S ribosomal subunit interface and may play a role in the structure and function of the aminoacyl-tRNA binding site. The sequence is that of Large ribosomal subunit protein bL19 from Bordetella avium (strain 197N).